The chain runs to 222 residues: Peptidyl-prolyl cis-trans isomerase FKBP7 (222 aa).

The signal sequence occupies residues 1-23 (MPKTMHFLFRFIVFFYLWGLFTA). Residue Asn45 is glycosylated (N-linked (GlcNAc...) asparagine). A PPIase FKBP-type domain is found at 53-145 (GDLLNAHYDG…IFEIELYAVT (93 aa)). EF-hand domains lie at 145–180 (TKGPRSIETFKQIDMDNDRQLSKAEINLYLQREFEK) and 189–222 (YQDAVLEDIFKKNDHDGDGFISPKEYNVYQHDEL). The Ca(2+) site is built by Asp158, Asp160, Asp162, Gln164, Glu169, Asp202, Asp204, Asp206, and Glu213. The tract at residues 200–222 (KNDHDGDGFISPKEYNVYQHDEL) is disordered. The Retention in the endoplasmic reticulum signature appears at 219 to 222 (HDEL).

In terms of processing, glycosylated.

It is found in the endoplasmic reticulum lumen. The catalysed reaction is [protein]-peptidylproline (omega=180) = [protein]-peptidylproline (omega=0). Functionally, PPIases accelerate the folding of proteins during protein synthesis. This Homo sapiens (Human) protein is Peptidyl-prolyl cis-trans isomerase FKBP7 (FKBP7).